The chain runs to 298 residues: uncharacterized protein (298 aa).

The protein to M.tuberculosis Rv1486c, M.bovis Mb1522c and M.avium MAV321.

This is an uncharacterized protein from Mycobacterium leprae (strain TN).